The chain runs to 425 residues: UDP-sugar transporter protein SLC35A5 (425 aa).

Residues 1-7 (MESNCGH) lie on the Cytoplasmic side of the membrane. The chain crosses the membrane as a helical span at residues 8 to 28 (PMLSVSSAMYTFLLGAIFITL). At 29–52 (SSSRILLVKYSANEENKYDYLPTT) the chain is on the lumenal side. A helical transmembrane segment spans residues 53–73 (VNVCSELVKLVFCALVSFWVL). Topologically, residues 74–92 (KKEDHQNRKLRCGSWKEFF) are cytoplasmic. A helical transmembrane segment spans residues 93–115 (NFMKWSIPAFLYFLDNLIVFYVL). The Lumenal portion of the chain corresponds to 116 to 119 (SYLQ). The chain crosses the membrane as a helical span at residues 120–142 (PAMAVIFSNFSIITTALLFRIVL). Over 143 to 147 (KRHLN) the chain is Cytoplasmic. A helical transmembrane segment spans residues 148 to 168 (GIQWASLLILFLSIVALTSGT). Over 169 to 228 (ETSQHSLAGHGFHHDALFSPSNSCLLFRSECPRKDNCTAKEWTFSEAQWNTTARVFSHIR) the chain is Lumenal. N-linked (GlcNAc...) asparagine glycans are attached at residues asparagine 204 and asparagine 218. A helical transmembrane segment spans residues 229 to 249 (LGLGHVLIIVQCFISSMANIY). Residues 250 to 263 (NEKILKEGNQLTES) are Cytoplasmic-facing. A helical membrane pass occupies residues 264 to 284 (IFVQNSKLYFFGVLFNGLTLG). Topologically, residues 285 to 303 (LQSGNRDQIKNCGIFYGHN) are lumenal. The chain crosses the membrane as a helical span at residues 304-324 (AFSVALIFVTAFQGLSVAFIL). Residues 325 to 330 (KFLDNM) lie on the Cytoplasmic side of the membrane. The chain crosses the membrane as a helical span at residues 331–351 (FHVLMAQVTTVVITTVSVLVF). Topologically, residues 352–354 (DFR) are lumenal. A helical transmembrane segment spans residues 355 to 375 (PSLEFFLEAPSVLLSILIYNA). The Cytoplasmic portion of the chain corresponds to 376–425 (SNPQGVENVPRKERIRDLSGTLWERSSGDGEELERLTKPKSDIESDEDTF). Residues serine 394, serine 416, and serine 420 each carry the phosphoserine modification. Residues 398-425 (WERSSGDGEELERLTKPKSDIESDEDTF) are disordered. Basic and acidic residues predominate over residues 408–418 (LERLTKPKSDI).

Belongs to the nucleotide-sugar transporter family. SLC35A subfamily. As to quaternary structure, probably forms homooligomers and heterooligomers with SLC35A1, SLC35A2, SLC35A3 and SLC35A4.

It is found in the golgi apparatus membrane. The catalysed reaction is UMP(out) + UDP-alpha-D-glucuronate(in) = UMP(in) + UDP-alpha-D-glucuronate(out). It catalyses the reaction UMP(out) + UDP-N-acetyl-alpha-D-glucosamine(in) = UMP(in) + UDP-N-acetyl-alpha-D-glucosamine(out). It carries out the reaction UDP-N-acetyl-alpha-D-galactosamine(in) + UMP(out) = UDP-N-acetyl-alpha-D-galactosamine(out) + UMP(in). In terms of biological role, probable UDP-sugar:UMP transmembrane antiporter involved in UDP-alpha-D-glucuronate/UDP-GlcA, UDP-GlcNAc/UDP-N-acetyl-alpha-D-glucosamine and UDP-N-acetyl-alpha-D-galactosamine/UDP-GalNAc transport from the cytosol to the lumen of the Golgi. The polypeptide is UDP-sugar transporter protein SLC35A5 (Bos taurus (Bovine)).